The chain runs to 124 residues: Snake venom vascular endothelial growth factor toxin apiscin (124 aa).

A signal peptide spans 1-24 (MAAYLLAVAILFCIQGWPSGTVQG). A Pyrrolidone carboxylic acid modification is found at Q25. 3 cysteine pairs are disulfide-bonded: C38–C80, C69–C115, and C73–C117.

Belongs to the PDGF/VEGF growth factor family. Snake venom VEGF subfamily. Homodimer; disulfide-linked. Interacts with VEGF receptor-1 (FLT1) with a high affinity, whereas it binds to VEGF receptor-2 (KDR) with a low affinity. Does not bind VEGF receptor-3 (FLT4). As to expression, expressed by the venom gland.

The protein resides in the secreted. Snake venom VEGFs that may contribute to venom dispersion and prey subjugation by inducing vascular permeability and hypotension. This protein induces an increase in capillary permeability after intradermal injection, as well as a drastic hypotensive effect after intravenous injection. The hypotension is mediated by nitric oxide (NO), which is produced by VEGF-activated endothelium NO synthase. Also induces angiogenesis in vitro. Like other crotalid VEGFs, this protein interacts with VEGF receptor-1 (FLT1) with a high affinity, whereas it binds to VEGF receptor-2 (KDR) with a low affinity. In Agkistrodon piscivorus piscivorus (Eastern cottonmouth), this protein is Snake venom vascular endothelial growth factor toxin apiscin.